A 102-amino-acid polypeptide reads, in one-letter code: MQSQNIRIRLKAFDYRVLDASTQEIVNTAKRTGAQVRGPIPLPNKIEKFTVLRGPHIDKKSRDQWEIRTHKRLLDIVDPTPQTVDALMKLDLAAGVDVEIKV.

Belongs to the universal ribosomal protein uS10 family. Part of the 30S ribosomal subunit.

In terms of biological role, involved in the binding of tRNA to the ribosomes. The chain is Small ribosomal subunit protein uS10 from Paracoccus denitrificans (strain Pd 1222).